Here is a 765-residue protein sequence, read N- to C-terminus: LPS-assembly protein LptD (765 aa).

The N-terminal stretch at 1–18 is a signal peptide; the sequence is MQIRYLLALSLLPKLVLA.

It belongs to the LptD family. As to quaternary structure, component of the lipopolysaccharide transport and assembly complex. Interacts with LptE and LptA.

The protein resides in the cell outer membrane. Together with LptE, is involved in the assembly of lipopolysaccharide (LPS) at the surface of the outer membrane. This is LPS-assembly protein LptD from Shewanella oneidensis (strain ATCC 700550 / JCM 31522 / CIP 106686 / LMG 19005 / NCIMB 14063 / MR-1).